The following is a 379-amino-acid chain: Leukocyte elastase inhibitor (379 aa).

Methionine 1 is subject to N-acetylmethionine. Residues lysine 137 and lysine 177 each carry the N6-acetyllysine modification. Serine 300 carries the phosphoserine modification. The tract at residues asparagine 351 to proline 379 is CARD-binding motif (CBM).

The protein belongs to the serpin family. Ov-serpin subfamily. Monomer. Interacts (via C-terminus) with CASP1; CASP4 (via CARD domain) and CASP5; these interactions regulate the activity of inflammatory caspases. Interacts with PRTN3. Interacts with GZMH. In human bone marrow, present in all CD45+ populations. Expression levels are highest in the neutrophil lineage, intermediate in monocytic, and lowest in lymphocytic lineage. Within the neutrophil lineage, expression is highest in promyelocytes.

It localises to the secreted. The protein localises to the cytoplasm. The protein resides in the cytolytic granule. Its subcellular location is the early endosome. Its function is as follows. Neutrophil serine protease inhibitor that plays an essential role in the regulation of the innate immune response, inflammation and cellular homeostasis. Acts primarily to protect the cell from proteases released in the cytoplasm during stress or infection. These proteases are important in killing microbes but when released from granules, these potent enzymes also destroy host proteins and contribute to mortality. Regulates the activity of the neutrophil proteases elastase, cathepsin G, proteinase-3, chymase, chymotrypsin, and kallikrein-3. Also acts as a potent intracellular inhibitor of GZMH by directly blocking its proteolytic activity. During inflammation, limits the activity of inflammatory caspases CASP1, CASP4 and CASP5 by suppressing their caspase-recruitment domain (CARD) oligomerization and enzymatic activation. When secreted, promotes the proliferation of beta-cells via its protease inhibitory function. The protein is Leukocyte elastase inhibitor (SERPINB1) of Homo sapiens (Human).